The following is a 291-amino-acid chain: Small ribosomal subunit biogenesis GTPase RsgA (291 aa).

One can recognise a CP-type G domain in the interval 63–221 (NNELKRPPVS…IADTPGFSAL (159 aa)). GTP contacts are provided by residues 112–115 (TKHD) and 164–172 (GQSGVGKST). Cysteine 245, cysteine 250, histidine 252, and cysteine 258 together coordinate Zn(2+).

It belongs to the TRAFAC class YlqF/YawG GTPase family. RsgA subfamily. In terms of assembly, monomer. Associates with 30S ribosomal subunit, binds 16S rRNA. It depends on Zn(2+) as a cofactor.

It localises to the cytoplasm. One of several proteins that assist in the late maturation steps of the functional core of the 30S ribosomal subunit. Helps release RbfA from mature subunits. May play a role in the assembly of ribosomal proteins into the subunit. Circularly permuted GTPase that catalyzes slow GTP hydrolysis, GTPase activity is stimulated by the 30S ribosomal subunit. The chain is Small ribosomal subunit biogenesis GTPase RsgA from Staphylococcus epidermidis (strain ATCC 12228 / FDA PCI 1200).